The primary structure comprises 444 residues: tRNA-2-methylthio-N(6)-dimethylallyladenosine synthase (444 aa).

An MTTase N-terminal domain is found at 8 to 122; it reads KTFYIETFGC…LAEMLVQIES (115 aa). [4Fe-4S] cluster is bound by residues C17, C53, C85, C160, C164, and C167. The 231-residue stretch at 146-376 folds into the Radical SAM core domain; it reads RGNAHRGYIT…MEHQREIQRA (231 aa). Positions 379 to 444 constitute a TRAM domain; it reads RKHIGETIEV…PNSLVGELVG (66 aa).

The protein belongs to the methylthiotransferase family. MiaB subfamily. In terms of assembly, monomer. [4Fe-4S] cluster is required as a cofactor.

The protein resides in the cytoplasm. It catalyses the reaction N(6)-dimethylallyladenosine(37) in tRNA + (sulfur carrier)-SH + AH2 + 2 S-adenosyl-L-methionine = 2-methylsulfanyl-N(6)-dimethylallyladenosine(37) in tRNA + (sulfur carrier)-H + 5'-deoxyadenosine + L-methionine + A + S-adenosyl-L-homocysteine + 2 H(+). In terms of biological role, catalyzes the methylthiolation of N6-(dimethylallyl)adenosine (i(6)A), leading to the formation of 2-methylthio-N6-(dimethylallyl)adenosine (ms(2)i(6)A) at position 37 in tRNAs that read codons beginning with uridine. This chain is tRNA-2-methylthio-N(6)-dimethylallyladenosine synthase, found in Koribacter versatilis (strain Ellin345).